A 219-amino-acid chain; its full sequence is Envelope protein US9 homolog (219 aa).

Residues 1-193 (MEKAEAAAVV…RHRRRRVALT (193 aa)) lie on the Intravirion side of the membrane. A Di-leucine internalization motif motif is present at residues 145–146 (LL). The segment at 153–168 (DYDSESGCYYSESDNE) is acidic. Phosphoserine; by host CK2 is present on residues Ser163 and Ser165. Residues 194-214 (VAGVILVVVLCAISGIVGAFL) form a helical; Signal-anchor for type II membrane protein membrane-spanning segment. Residues 215 to 219 (ARVFP) are Virion surface-facing.

This sequence belongs to the alphaherpesvirinae envelope protein US9 family. In terms of processing, phosphorylated on serines within the acidic cluster. Phosphorylation determines whether endocytosed viral US9 traffics to the trans-Golgi network or recycles to the cell membrane.

The protein localises to the virion membrane. Its subcellular location is the host Golgi apparatus membrane. It is found in the host smooth endoplasmic reticulum membrane. It localises to the host cell membrane. In terms of biological role, essential for the anterograde spread of the infection throughout the host nervous system. Together with the gE/gI heterodimer, US9 is involved in the sorting and transport of viral structural components toward axon tips. This chain is Envelope protein US9 homolog, found in Equine herpesvirus 1 (strain Ab4p) (EHV-1).